Here is a 299-residue protein sequence, read N- to C-terminus: MTFKSGFVAILGRPNVGKSTFLNHVMGQKIAIMSDKAQTTRNKIMGIYTTDKEQIVFIDTPGIHKPKTALGDFMVESAYSTLREVDTVLFMVPADEARGKGDDMIIERLKAAKVPVILVVNKIDKVHPDQLLSQIDDFRNQMDFKEIVPISALQGNNVSRLVDILSENLDEGFQYFPSDQITDHPERFLVSEMVREKVLHLTREEIPHSVAVVVDSMKRDEETDKVHIRATIMVERDSQKGIIIGKGGAMLKKIGSMARRDIELMLGDKVFLETWVKVKKNWRDKKLDLADFGYNEKEY.

Residues 4–171 enclose the Era-type G domain; that stretch reads KSGFVAILGR…VDILSENLDE (168 aa). Positions 12-19 are G1; it reads GRPNVGKS. 12 to 19 serves as a coordination point for GTP; the sequence is GRPNVGKS. Residues 38–42 are G2; that stretch reads QTTRN. Residues 59–62 form a G3 region; it reads DTPG. GTP contacts are provided by residues 59 to 63 and 121 to 124; these read DTPGI and NKID. The segment at 121–124 is G4; the sequence is NKID. The interval 150–152 is G5; the sequence is ISA. The KH type-2 domain maps to 202-280; that stretch reads TREEIPHSVA…FLETWVKVKK (79 aa).

This sequence belongs to the TRAFAC class TrmE-Era-EngA-EngB-Septin-like GTPase superfamily. Era GTPase family. In terms of assembly, monomer.

Its subcellular location is the cytoplasm. The protein resides in the cell membrane. Functionally, an essential GTPase that binds both GDP and GTP, with rapid nucleotide exchange. Plays a role in 16S rRNA processing and 30S ribosomal subunit biogenesis and possibly also in cell cycle regulation and energy metabolism. The chain is GTPase Era from Streptococcus pneumoniae (strain Hungary19A-6).